The sequence spans 149 residues: Prefoldin subunit alpha (149 aa).

The protein belongs to the prefoldin alpha subunit family. In terms of assembly, heterohexamer of two alpha and four beta subunits.

It localises to the cytoplasm. In terms of biological role, molecular chaperone capable of stabilizing a range of proteins. Seems to fulfill an ATP-independent, HSP70-like function in archaeal de novo protein folding. This chain is Prefoldin subunit alpha, found in Methanoculleus marisnigri (strain ATCC 35101 / DSM 1498 / JR1).